The chain runs to 108 residues: uncharacterized protein (108 aa).

The signal sequence occupies residues 1–22 (MMIKQCVICLSLLVFGTTAAHA).

This is an uncharacterized protein from Bacillus subtilis (strain 168).